The primary structure comprises 415 residues: Phosphoribosylamine--glycine ligase (415 aa).

An ATP-grasp domain is found at 108 to 311; the sequence is KKIMEKYNIP…LMQHIIDLDE (204 aa). Position 134-191 (134-191) interacts with ATP; sequence IENCELPVVVKKDGLAAGKGVIIADTIEAARSAIEIMYGDEEEGTVVFETFLEGEEFS. 2 residues coordinate Mg(2+): E281 and N283.

It belongs to the GARS family. Mg(2+) is required as a cofactor. It depends on Mn(2+) as a cofactor.

It catalyses the reaction 5-phospho-beta-D-ribosylamine + glycine + ATP = N(1)-(5-phospho-beta-D-ribosyl)glycinamide + ADP + phosphate + H(+). It participates in purine metabolism; IMP biosynthesis via de novo pathway; N(1)-(5-phospho-D-ribosyl)glycinamide from 5-phospho-alpha-D-ribose 1-diphosphate: step 2/2. In Staphylococcus aureus (strain COL), this protein is Phosphoribosylamine--glycine ligase.